Here is a 251-residue protein sequence, read N- to C-terminus: 4-hydroxy-tetrahydrodipicolinate reductase (251 aa).

NAD(+) contacts are provided by residues 8–13, 76–78, and 106–109; these read GAKGRM, GTT, and APNF. The active-site Proton donor/acceptor is His-136. His-137 lines the (S)-2,3,4,5-tetrahydrodipicolinate pocket. Lys-140 functions as the Proton donor in the catalytic mechanism. 146–147 contributes to the (S)-2,3,4,5-tetrahydrodipicolinate binding site; that stretch reads GT.

Belongs to the DapB family.

It localises to the cytoplasm. It catalyses the reaction (S)-2,3,4,5-tetrahydrodipicolinate + NAD(+) + H2O = (2S,4S)-4-hydroxy-2,3,4,5-tetrahydrodipicolinate + NADH + H(+). It carries out the reaction (S)-2,3,4,5-tetrahydrodipicolinate + NADP(+) + H2O = (2S,4S)-4-hydroxy-2,3,4,5-tetrahydrodipicolinate + NADPH + H(+). Its pathway is amino-acid biosynthesis; L-lysine biosynthesis via DAP pathway; (S)-tetrahydrodipicolinate from L-aspartate: step 4/4. In terms of biological role, catalyzes the conversion of 4-hydroxy-tetrahydrodipicolinate (HTPA) to tetrahydrodipicolinate. The chain is 4-hydroxy-tetrahydrodipicolinate reductase from Bifidobacterium longum (strain NCC 2705).